Reading from the N-terminus, the 131-residue chain is MHNKRYNPDVVIDFGVDFSNDYNKSKNKFFDRYIIFNKDFMKYIFKLALRALIMIGIIELSYFISLGGFYLVSNDPIYFRNLSIFHARGVEFATECSDIISIFCSIAFVLFCIYDVGKYYVTKCKSSKRYQ.

2 consecutive transmembrane segments (helical) span residues 52-72 (LIMI…FYLV) and 97-117 (SDII…YDVG).

The protein resides in the membrane. This is an uncharacterized protein from Acanthamoeba polyphaga mimivirus (APMV).